A 301-amino-acid chain; its full sequence is Homoserine O-acetyltransferase (301 aa).

The active-site Acyl-thioester intermediate is cysteine 142. The substrate site is built by lysine 163 and serine 192. Residue histidine 235 is the Proton acceptor of the active site. Glutamate 237 is a catalytic residue. Arginine 249 contacts substrate.

It belongs to the MetA family. In terms of assembly, homodimer.

The protein localises to the cytoplasm. The catalysed reaction is L-homoserine + acetyl-CoA = O-acetyl-L-homoserine + CoA. It functions in the pathway amino-acid biosynthesis; L-methionine biosynthesis via de novo pathway; O-acetyl-L-homoserine from L-homoserine: step 1/1. Transfers an acetyl group from acetyl-CoA to L-homoserine, forming acetyl-L-homoserine. Utilizes a ping-pong kinetic mechanism in which the acetyl group of acetyl-CoA is initially transferred to the enzyme to form an acetyl-enzyme intermediate before subsequent transfer to homoserine to form the final product, O-acetylhomoserine. Cannot use succinyl-CoA as the acyl donor. The sequence is that of Homoserine O-acetyltransferase from Bacillus cereus (strain ATCC 10987 / NRS 248).